The following is a 173-amino-acid chain: 2-C-methyl-D-erythritol 2,4-cyclodiphosphate synthase (173 aa).

A divalent metal cation is bound by residues Asp17 and His19. 4-CDP-2-C-methyl-D-erythritol 2-phosphate contacts are provided by residues 17 to 19 and 49 to 50; these read DVH and HS. His57 is an a divalent metal cation binding site. 4-CDP-2-C-methyl-D-erythritol 2-phosphate is bound by residues 76–80, 147–150, Phe154, and Arg157; these read FPNTD and TTTE.

It belongs to the IspF family. As to quaternary structure, homotrimer. A divalent metal cation serves as cofactor.

It carries out the reaction 4-CDP-2-C-methyl-D-erythritol 2-phosphate = 2-C-methyl-D-erythritol 2,4-cyclic diphosphate + CMP. The protein operates within isoprenoid biosynthesis; isopentenyl diphosphate biosynthesis via DXP pathway; isopentenyl diphosphate from 1-deoxy-D-xylulose 5-phosphate: step 4/6. Functionally, involved in the biosynthesis of isopentenyl diphosphate (IPP) and dimethylallyl diphosphate (DMAPP), two major building blocks of isoprenoid compounds. Catalyzes the conversion of 4-diphosphocytidyl-2-C-methyl-D-erythritol 2-phosphate (CDP-ME2P) to 2-C-methyl-D-erythritol 2,4-cyclodiphosphate (ME-CPP) with a corresponding release of cytidine 5-monophosphate (CMP). The polypeptide is 2-C-methyl-D-erythritol 2,4-cyclodiphosphate synthase (Ehrlichia canis (strain Jake)).